Here is a 229-residue protein sequence, read N- to C-terminus: Bcl-2-like protein 1 (229 aa).

The BH4 signature appears at 4–24 (SNRELVIDFVSYKLSQRGHCW). A BH3 motif is present at residues 82-96 (VRQALRDAGDEFELR). Residues 125–144 (ELFHDGVNWGRIVAFFSFGG) carry the BH1 motif. Positions 176–191 (PWIQENGGWERFVDLY) match the BH2 motif. A helical membrane pass occupies residues 206–223 (FNKWLLTGATVAGVLLLG).

It belongs to the Bcl-2 family. Highest expression in organs with lymphoid development.

Its subcellular location is the mitochondrion membrane. It is found in the nucleus membrane. The protein localises to the mitochondrion matrix. The protein resides in the cytoplasm. It localises to the cytoskeleton. Its subcellular location is the microtubule organizing center. It is found in the centrosome. The protein localises to the cytosol. The protein resides in the cytoplasmic vesicle. It localises to the secretory vesicle. Its subcellular location is the synaptic vesicle membrane. Dominant regulator of apoptotic cell death. The long form displays cell death repressor activity, whereas the short isoform promotes apoptosis. Also acts as a regulator of G2 checkpoint and progression to cytokinesis during mitosis. This chain is Bcl-2-like protein 1 (BCL2L1), found in Gallus gallus (Chicken).